The sequence spans 297 residues: N-acetylmuramic acid 6-phosphate etherase (297 aa).

The region spanning 55–218 (ITKHFKQGGR…STGAMVGIGK (164 aa)) is the SIS domain. E83 functions as the Proton donor in the catalytic mechanism. Residue E114 is part of the active site.

The protein belongs to the GCKR-like family. MurNAc-6-P etherase subfamily. Homodimer.

It carries out the reaction N-acetyl-D-muramate 6-phosphate + H2O = N-acetyl-D-glucosamine 6-phosphate + (R)-lactate. Its pathway is amino-sugar metabolism; N-acetylmuramate degradation. Its function is as follows. Specifically catalyzes the cleavage of the D-lactyl ether substituent of MurNAc 6-phosphate, producing GlcNAc 6-phosphate and D-lactate. This chain is N-acetylmuramic acid 6-phosphate etherase, found in Oenococcus oeni (strain ATCC BAA-331 / PSU-1).